The sequence spans 1083 residues: Regulator of the glycerol channel 1 (1083 aa).

Disordered stretches follow at residues 1 to 46 and 69 to 89; these read MSDY…GSSD and LKNE…KENK. Polar residues predominate over residues 13 to 31; the sequence is GGISKQPATPGSTRSSSRN. Residues Ser-136, Ser-249, Ser-252, Ser-481, and Ser-537 each carry the phosphoserine modification. One can recognise a PH domain in the interval 495 to 606; sequence CIRVGYLLKK…DCSLKDSTDS (112 aa). The interval 534-582 is disordered; sequence DSKSPRSKNKPVVEQSDISRVNKDGTNAGSHPSSKGTQDPKLTKRRKGL. A compositionally biased stretch (polar residues) spans 549–570; sequence SDISRVNKDGTNAGSHPSSKGT. Phosphoserine is present on residues Ser-652, Ser-765, and Ser-813. Phosphothreonine occurs at positions 817 and 857. Residues Ser-866, Ser-879, Ser-918, Ser-966, Ser-969, and Ser-975 each carry the phosphoserine modification. Residues 979-1083 are disordered; the sequence is EENRTQNCSG…TVPATSASSK (105 aa). Polar residues-rich tracts occupy residues 983–992, 1043–1061, and 1071–1083; these read TQNCSGSRKS, LKKT…VSND, and STNT…ASSK. Phosphoserine occurs at positions 1059, 1081, and 1082.

It belongs to the RGC1 family.

Its subcellular location is the cytoplasm. Its function is as follows. Positive regulator of FPS1 glycerol channel required for the glycerol efflux. This Saccharomyces cerevisiae (strain ATCC 204508 / S288c) (Baker's yeast) protein is Regulator of the glycerol channel 1 (RGC1).